Consider the following 423-residue polypeptide: MTAKFVVRGGNRLSGTVTIGGAKNSALPIVTAAALAAEGESILENVPDNSDIQHLCEILRALGCRVERVAETTLRIQARELEHHVAPYHLARRLRGSTYVMGLLLARLGKGEVACPGGCEIGARPVDFHLKGFRALGAEVVVEHGAMVSRRVDLRGGRFYVDRASVGTTVNMIITASLAPGVTVLENAACEPEIVDLANFINAMGGRVRGAGTNTVRIEGVDRLRGARHEIIPDRIEAGTYMMMTAAAGGDVVVENVIPEHLGTVIAKLVEAGQEVEEHGDCIRVRARPIRAVDVETQVYPGFPTDLQSPWVALMGLADGISVVHETIFENRFGFTNELIRMGAKIKVDRNTGIIRGVKRYTGAPVEARDIRGGAALVTAALAAEGVTEVSGVQYIDRGYTRMEEKLAALGADIRRVPNGSEQ.

23 to 24 (KN) contacts phosphoenolpyruvate. R95 contributes to the UDP-N-acetyl-alpha-D-glucosamine binding site. Residue C119 is the Proton donor of the active site. 2-(S-cysteinyl)pyruvic acid O-phosphothioketal is present on C119. Residues D306 and I328 each contribute to the UDP-N-acetyl-alpha-D-glucosamine site.

It belongs to the EPSP synthase family. MurA subfamily.

It is found in the cytoplasm. It catalyses the reaction phosphoenolpyruvate + UDP-N-acetyl-alpha-D-glucosamine = UDP-N-acetyl-3-O-(1-carboxyvinyl)-alpha-D-glucosamine + phosphate. Its pathway is cell wall biogenesis; peptidoglycan biosynthesis. Cell wall formation. Adds enolpyruvyl to UDP-N-acetylglucosamine. The protein is UDP-N-acetylglucosamine 1-carboxyvinyltransferase 2 of Symbiobacterium thermophilum (strain DSM 24528 / JCM 14929 / IAM 14863 / T).